A 384-amino-acid chain; its full sequence is Sphingosine kinase 1 (384 aa).

The DAGKc domain maps to Pro12 to Ser159. ATP contacts are provided by residues Asn22–Arg24 and Thr54–Asn58. Ser79 to Gly82 provides a ligand contact to substrate. The Proton donor/acceptor role is filled by Asp81. Residues Glu86 and Gly111 to Gly113 contribute to the ATP site. 2 consecutive short sequence motifs (nuclear export signal) follow at residues Leu147 to Leu155 and Leu161 to Leu169. Asp178 provides a ligand contact to substrate. Residues Arg185 and Arg191 each contribute to the ATP site. Thr193 is modified (phosphothreonine). Ser225 bears the Phosphoserine mark. Asp341–Glu343 is a binding site for ATP.

In terms of assembly, interacts with ACY1. Binds to calmodulin. Interacts with SPHKAP. Interacts with CIB1, the interaction occurs in a calcium-dependent manner. Interacts with TRAF2. Interacts with EEF1A1; the interaction enhances SPHK1 kinase activity. Mg(2+) serves as cofactor. As to expression, widely expressed with highest levels in adult liver, kidney, heart and skeletal muscle. Expressed in brain cortex (at protein level).

It is found in the cytoplasm. Its subcellular location is the nucleus. The protein resides in the cell membrane. It localises to the endosome membrane. The protein localises to the membrane. It is found in the clathrin-coated pit. Its subcellular location is the synapse. It carries out the reaction a sphingoid base + ATP = a sphingoid 1-phosphate + ADP + H(+). It catalyses the reaction L-seryl-[protein] + acetyl-CoA = O-acetyl-L-seryl-[protein] + CoA. The enzyme catalyses sphinganine + ATP = sphinganine 1-phosphate + ADP + H(+). The catalysed reaction is sphing-4-enine + ATP = sphing-4-enine 1-phosphate + ADP + H(+). It carries out the reaction 1-O-hexadecyl-2-amino-sn-glycerol + ATP = 1-O-hexadecyl-2-desoxy-2-amino-sn-glycero-3-phosphate + ADP + H(+). With respect to regulation, acetyltransferase activity increases in presence of the kinase substrate, sphingosine. In Purkinje cells, kinase activity on sphingosine increases in presence of VEGFA. In neurons, kinase activity increases during the first 24h in presence of Amyloid-beta protein 42 to decrease after 96h. In terms of biological role, catalyzes the phosphorylation of sphingosine to form sphingosine 1-phosphate (SPP), a lipid mediator with both intra- and extracellular functions. Also acts on D-erythro-sphingosine and to a lesser extent sphinganine, but not other lipids, such as D,L-threo-dihydrosphingosine, N,N-dimethylsphingosine, diacylglycerol, ceramide, or phosphatidylinositol. In contrast to proapoptotic SPHK2, has a negative effect on intracellular ceramide levels, enhances cell growth and inhibits apoptosis. Involved in the regulation of inflammatory response and neuroinflammation. Via the product sphingosine 1-phosphate, stimulates TRAF2 E3 ubiquitin ligase activity, and promotes activation of NF-kappa-B in response to TNF signaling leading to IL17 secretion. In response to TNF and in parallel to NF-kappa-B activation, negatively regulates RANTES induction through p38 MAPK signaling pathway. Involved in endocytic membrane trafficking induced by sphingosine, recruited to dilate endosomes, also plays a role on later stages of endosomal maturation and membrane fusion independently of its kinase activity. In Purkinje cells, seems to be also involved in the regulation of autophagosome-lysosome fusion upon VEGFA. Functionally, has serine acetyltransferase activity on PTGS2/COX2 in an acetyl-CoA dependent manner. The acetyltransferase activity increases in presence of the kinase substrate, sphingosine. During neuroinflammation, through PTGS2 acetylation, promotes neuronal secretion of specialized preresolving mediators (SPMs), especially 15-R-lipoxin A4, which results in an increase of phagocytic microglia. The protein is Sphingosine kinase 1 of Homo sapiens (Human).